The sequence spans 365 residues: Probable secreted beta-glucosidase UTH1 (365 aa).

The signal sequence occupies residues 1-17 (MKLSALLALSASTAVLA).

This sequence belongs to the SUN family.

It is found in the mitochondrion outer membrane. The protein localises to the secreted. The protein resides in the cell wall. In terms of biological role, involved in aging, oxidative stress response, and in the regulation of mitochondrial biogenesis. Inactivation of UTH1 increases life span, leads to higher resistance to heat stress and against hydrogen peroxide, and increases sensitivity to the superoxide radical-generating drug paraquat and to copper. Also required for the selective autophagic degradation of mitochondria (mitophagy) in response to nitrogen starvation. Involved in the remodeling of the cell wall during the various phases of yeast culture development and under various environmental conditions and plays a role in septation. Involved in cell sensitivity to boric acid. This chain is Probable secreted beta-glucosidase UTH1 (UTH1), found in Saccharomyces cerevisiae (strain ATCC 204508 / S288c) (Baker's yeast).